A 142-amino-acid polypeptide reads, in one-letter code: Large ribosomal subunit protein uL13 (142 aa).

It belongs to the universal ribosomal protein uL13 family. In terms of assembly, part of the 50S ribosomal subunit.

Functionally, this protein is one of the early assembly proteins of the 50S ribosomal subunit, although it is not seen to bind rRNA by itself. It is important during the early stages of 50S assembly. This chain is Large ribosomal subunit protein uL13, found in Mannheimia succiniciproducens (strain KCTC 0769BP / MBEL55E).